Consider the following 470-residue polypeptide: MKQLSRKVTSNAHGQDSSYFLGWEEYEKNPYDEIKNPNGIIQMGLAENQLCFDLIETWLAKNPDAAGLKKDGQSIFKELALFQDYHGLPEFKKALAEFMEEIRGNRVTFDPSKIVLAAGSTSANETLMFCLAEPGDAFLLPTPYYPGFDRDLKWRTGAEIVPIHCSSSNGFQITESALQQAYQQAQKLDLKVKGVLVTNPSNPLGTMLTRRELNLLVDFITSKNIHLISDEIYSGTVFGFEQFVSVMDVLKDKNLENSEVSKRVHIVYSLSKDLGLPGFRVGAIYSNDEMVVSAATKMSSFGLVSSQTQYLLSALLSDKKFTSTYLDENQKRLKIRQKKLVSGLEAAGITCLKSNAGLFCWVDMRHLLDTNTFEAELELWKKIVYDVKLNISPGSSCHCTEPGWFRVCFANMSEDTLDLAMKRLKEYVESTDSRRVISKSSHDRIKSLRKRTVSNWVFRVSWTDRVPDER.

Substrate is bound by residues Glu-47 and Tyr-85. Lys-272 carries the N6-(pyridoxal phosphate)lysine modification.

The protein belongs to the class-I pyridoxal-phosphate-dependent aminotransferase family. In terms of assembly, homodimer and heterodimer. In vivo, the relevance of heterodimerization with other ACS enzymes is however unsure. Interacts (via its C-terminal region) with FEI1, FEI2, ETO1 and EOL1. Requires pyridoxal 5'-phosphate as cofactor. In terms of processing, may be processed at its C-terminus. In terms of tissue distribution, expressed in roots and siliques.

It carries out the reaction S-adenosyl-L-methionine = 1-aminocyclopropane-1-carboxylate + S-methyl-5'-thioadenosine + H(+). It participates in alkene biosynthesis; ethylene biosynthesis via S-adenosyl-L-methionine; ethylene from S-adenosyl-L-methionine: step 1/2. Its function is as follows. 1-aminocyclopropane-1-carboxylate synthase (ACS) enzymes catalyze the conversion of S-adenosyl-L-methionine (SAM) into 1-aminocyclopropane-1-carboxylate (ACC), a direct precursor of ethylene. This chain is 1-aminocyclopropane-1-carboxylate synthase 9 (ACS9), found in Arabidopsis thaliana (Mouse-ear cress).